A 312-amino-acid polypeptide reads, in one-letter code: Olfactory receptor 2L2 (312 aa).

At 1–24 (MENYNQTSTDFILLGLFPQSRIGL) the chain is on the extracellular side. N-linked (GlcNAc...) asparagine glycosylation is present at Asn-5. A helical membrane pass occupies residues 25 to 48 (FVFTLIFLIFLMALIGNLSMILLI). The Cytoplasmic portion of the chain corresponds to 49 to 56 (FLDIHLHT). A helical transmembrane segment spans residues 57–78 (PMYFLLSQLSLIDLNYISTIVP). The Extracellular portion of the chain corresponds to 79–99 (KMVYDFLYGNKSISFTGCGIQ). N-linked (GlcNAc...) asparagine glycosylation is present at Asn-88. A disulfide bond links Cys-96 and Cys-188. The chain crosses the membrane as a helical span at residues 100-119 (SFFFLTLAVAEGLLLTSMAY). Over 120 to 138 (DRYVAICFPLHYPIRISKR) the chain is Cytoplasmic. Residues 139–157 (VCVMMITGSWMISSINSCA) traverse the membrane as a helical segment. The Extracellular portion of the chain corresponds to 158–194 (HTVYALCIPYCKSRAINHFFCDVPAMLTLACTDTWVY). A helical transmembrane segment spans residues 195–218 (ESTVFLSSTIFLVLPFTGIACSYG). The Cytoplasmic segment spans residues 219–235 (RVLLAVYRMHSAEGRKK). The helical transmembrane segment at 236-258 (AYSTCSTHLTVVSFYYAPFAYTY) threads the bilayer. Residues 259 to 271 (VRPRSLRSPTEDK) lie on the Extracellular side of the membrane. The helical transmembrane segment at 272-291 (ILAVFYTILTPMLNPIIYSL) threads the bilayer. Over 292–312 (RNKEVMGALTQVIQKIFSVKM) the chain is Cytoplasmic.

Belongs to the G-protein coupled receptor 1 family.

The protein resides in the cell membrane. In terms of biological role, odorant receptor. This chain is Olfactory receptor 2L2 (OR2L2), found in Homo sapiens (Human).